A 400-amino-acid polypeptide reads, in one-letter code: Diphosphomevalonate decarboxylase (400 aa).

A2 bears the N-acetylalanine mark. Residues 23–26 (YWGK) and R78 each bind (R)-5-diphosphomevalonate. Position 96 is a phosphoserine (S96). (R)-5-diphosphomevalonate contacts are provided by residues 156–161 (SGSACR) and T212.

This sequence belongs to the diphosphomevalonate decarboxylase family. Homodimer. Expressed in heart, skeletal muscle, lung, liver, brain, pancreas, kidney and placenta.

Its subcellular location is the cytoplasm. The catalysed reaction is (R)-5-diphosphomevalonate + ATP = isopentenyl diphosphate + ADP + phosphate + CO2. It participates in steroid biosynthesis; cholesterol biosynthesis. Its function is as follows. Catalyzes the ATP dependent decarboxylation of (R)-5-diphosphomevalonate to form isopentenyl diphosphate (IPP). Functions in the mevalonate (MVA) pathway leading to isopentenyl diphosphate (IPP), a key precursor for the biosynthesis of isoprenoids and sterol synthesis. This is Diphosphomevalonate decarboxylase (MVD) from Homo sapiens (Human).